The chain runs to 598 residues: Elongation factor 4 (598 aa).

The tr-type G domain maps to 2–183; sequence KNIRNFCIIA…AIINRVPAPS (182 aa). GTP contacts are provided by residues 14–19 and 130–133; these read DHGKST and NKVD.

This sequence belongs to the TRAFAC class translation factor GTPase superfamily. Classic translation factor GTPase family. LepA subfamily.

The protein resides in the cell inner membrane. It carries out the reaction GTP + H2O = GDP + phosphate + H(+). Functionally, required for accurate and efficient protein synthesis under certain stress conditions. May act as a fidelity factor of the translation reaction, by catalyzing a one-codon backward translocation of tRNAs on improperly translocated ribosomes. Back-translocation proceeds from a post-translocation (POST) complex to a pre-translocation (PRE) complex, thus giving elongation factor G a second chance to translocate the tRNAs correctly. Binds to ribosomes in a GTP-dependent manner. The chain is Elongation factor 4 from Christiangramia forsetii (strain DSM 17595 / CGMCC 1.15422 / KT0803) (Gramella forsetii).